A 449-amino-acid polypeptide reads, in one-letter code: Heterogeneous nuclear ribonucleoprotein H (449 aa).

M1 carries the post-translational modification N-acetylmethionine; in Heterogeneous nuclear ribonucleoprotein H; alternate. N-acetylmethionine; in Heterogeneous nuclear ribonucleoprotein H, N-terminally processed is present on M2. The 80-residue stretch at 11 to 90 (FVVKVRGLPW…RYVEVFKSNN (80 aa)) folds into the RRM 1 domain. A Phosphoserine modification is found at S23. A Glycyl lysine isopeptide (Lys-Gly) (interchain with G-Cter in SUMO2) cross-link involves residue K35. Residues S54 and S63 each carry the phosphoserine modification. Glycyl lysine isopeptide (Lys-Gly) (interchain with G-Cter in SUMO2) cross-links involve residues K87 and K98. Positions 111 to 188 (GFVRLRGLPF…RYIEIFKSSR (78 aa)) constitute an RRM 2 domain. R233 carries the dimethylated arginine; alternate modification. Omega-N-methylarginine; alternate is present on R233. The 1-1 repeat unit spans residues 234 to 249 (GAYGGGYGGYDDYNGY). The tract at residues 234–433 (GAYGGGYGGY…YGGQSSMSGY (200 aa)) is 2 X 16 AA Gly-rich approximate repeats. The residue at position 246 (Y246) is a Phosphotyrosine. In terms of domain architecture, RRM 3 spans 289–364 (HCVHMRGLPY…RYVELFLNST (76 aa)). At S310 the chain carries Phosphoserine. 3 consecutive repeat copies span residues 354–372 (HRYV…GGAY), 374–392 (HRYV…GGAY), and 418–433 (GGYG…MSGY). The 2 X 19 AA perfect repeats stretch occupies residues 354-392 (HRYVELFLNSTAGASGGAYEHRYVELFLNSTAGASGGAY).

As to quaternary structure, part of a ternary complex containing FUBP2, PTBP1, PTBP2 and HNRNPH1. Identified in the spliceosome C complex. Interacts with IGF2BP1. Interacts with CUGBP1; the interaction is RNA-dependent. Interacts with MBNL1; the interaction in RNA-independent. As to expression, expressed ubiquitously.

The protein localises to the nucleus. It is found in the nucleoplasm. In terms of biological role, this protein is a component of the heterogeneous nuclear ribonucleoprotein (hnRNP) complexes which provide the substrate for the processing events that pre-mRNAs undergo before becoming functional, translatable mRNAs in the cytoplasm. Mediates pre-mRNA alternative splicing regulation. Inhibits, together with CUGBP1, insulin receptor (IR) pre-mRNA exon 11 inclusion in myoblast. Binds to the IR RNA. Binds poly(RG). The chain is Heterogeneous nuclear ribonucleoprotein H (HNRNPH1) from Homo sapiens (Human).